The chain runs to 106 residues: Stress-responsive protein 1 (106 aa).

Its subcellular location is the mitochondrion. Functionally, stress-responsive protein that may play a role in regulation of cell cycle. The chain is Stress-responsive protein 1 (sro1) from Schizosaccharomyces pombe (strain 972 / ATCC 24843) (Fission yeast).